The primary structure comprises 91 residues: Large ribosomal subunit protein uL23 (91 aa).

Belongs to the universal ribosomal protein uL23 family. In terms of assembly, part of the 50S ribosomal subunit. Contacts protein L29, and trigger factor when it is bound to the ribosome.

Functionally, one of the early assembly proteins it binds 23S rRNA. One of the proteins that surrounds the polypeptide exit tunnel on the outside of the ribosome. Forms the main docking site for trigger factor binding to the ribosome. The polypeptide is Large ribosomal subunit protein uL23 (Macrococcus caseolyticus (strain JCSC5402) (Macrococcoides caseolyticum)).